The primary structure comprises 357 residues: Alanine racemase, catabolic (357 aa).

The active-site Proton acceptor; specific for D-alanine is lysine 33. Lysine 33 carries the N6-(pyridoxal phosphate)lysine modification. Arginine 129 is a substrate binding site. The active-site Proton acceptor; specific for L-alanine is tyrosine 253. Residue methionine 301 participates in substrate binding.

It belongs to the alanine racemase family. Requires pyridoxal 5'-phosphate as cofactor.

The catalysed reaction is L-alanine = D-alanine. The protein operates within amino-acid biosynthesis; D-alanine biosynthesis; D-alanine from L-alanine: step 1/1. In terms of biological role, isomerizes L-alanine to D-alanine which is then likely oxidized to pyruvate by DadA. Shows racemase activity with both alanine stereoisomers, negligible activity with D-cysteine and L-serine, and exhibits no activity with the remaining natural chiral amino acids. The protein is Alanine racemase, catabolic of Pseudomonas putida (strain ATCC 47054 / DSM 6125 / CFBP 8728 / NCIMB 11950 / KT2440).